A 454-amino-acid polypeptide reads, in one-letter code: MSTTVIILAAGKGTRMRSQLPKVLQPLAGRPLLGHVIKTAKQLLAENIITIYGHGGDHVKKTFAQENIQWVEQAEQLGTGHAVQMTLPVLPKDGISLILYGDVPLVRQTTLEQLIEVSNKTGIGMITLHVDNPTGYGRIVRQDGKIQAIVEHKDATEAQRQIQEINTGIYCVSNAKLHEWLPKLSNENAQGEYYLTDIVAMAVADGLEIASIQPELAFEVEGVNDRLQLAALEREFQKQQAKELMQQGVTFADPARFDLRGTVKVGHDVRIDVNVIIEGDCELGDFVEIGAGCILKNTTIAAGTKVQAYSVFDGAVVGENTQIGPFARLRPGAKLANEVHIGNFVEVKNTTIGLGSKANHFTYLGDAEIGAESNIGAGTITCNYDGANKHKTTIGDAVFIGSNSSLVAPVTIGNGATVGAGSVITKDVAEQSLSFERAQQISKANYQRPQKLKK.

Residues 1-226 (MSTTVIILAA…AFEVEGVNDR (226 aa)) are pyrophosphorylase. UDP-N-acetyl-alpha-D-glucosamine is bound by residues 8 to 11 (LAAG), K22, Q73, 78 to 79 (GT), 100 to 102 (YGD), G137, E151, N166, and N224. A Mg(2+)-binding site is contributed by D102. N224 serves as a coordination point for Mg(2+). The interval 227 to 247 (LQLAALEREFQKQQAKELMQQ) is linker. The tract at residues 248-454 (GVTFADPARF…NYQRPQKLKK (207 aa)) is N-acetyltransferase. Positions 330 and 348 each coordinate UDP-N-acetyl-alpha-D-glucosamine. Residue H360 is the Proton acceptor of the active site. Residues Y363 and N374 each contribute to the UDP-N-acetyl-alpha-D-glucosamine site. Acetyl-CoA contacts are provided by residues A377, 383 to 384 (NY), S402, A420, and R437.

This sequence in the N-terminal section; belongs to the N-acetylglucosamine-1-phosphate uridyltransferase family. The protein in the C-terminal section; belongs to the transferase hexapeptide repeat family. In terms of assembly, homotrimer. The cofactor is Mg(2+).

The protein localises to the cytoplasm. The catalysed reaction is alpha-D-glucosamine 1-phosphate + acetyl-CoA = N-acetyl-alpha-D-glucosamine 1-phosphate + CoA + H(+). It catalyses the reaction N-acetyl-alpha-D-glucosamine 1-phosphate + UTP + H(+) = UDP-N-acetyl-alpha-D-glucosamine + diphosphate. It functions in the pathway nucleotide-sugar biosynthesis; UDP-N-acetyl-alpha-D-glucosamine biosynthesis; N-acetyl-alpha-D-glucosamine 1-phosphate from alpha-D-glucosamine 6-phosphate (route II): step 2/2. It participates in nucleotide-sugar biosynthesis; UDP-N-acetyl-alpha-D-glucosamine biosynthesis; UDP-N-acetyl-alpha-D-glucosamine from N-acetyl-alpha-D-glucosamine 1-phosphate: step 1/1. Its pathway is bacterial outer membrane biogenesis; LPS lipid A biosynthesis. Functionally, catalyzes the last two sequential reactions in the de novo biosynthetic pathway for UDP-N-acetylglucosamine (UDP-GlcNAc). The C-terminal domain catalyzes the transfer of acetyl group from acetyl coenzyme A to glucosamine-1-phosphate (GlcN-1-P) to produce N-acetylglucosamine-1-phosphate (GlcNAc-1-P), which is converted into UDP-GlcNAc by the transfer of uridine 5-monophosphate (from uridine 5-triphosphate), a reaction catalyzed by the N-terminal domain. The protein is Bifunctional protein GlmU of Acinetobacter baumannii (strain ACICU).